Here is a 164-residue protein sequence, read N- to C-terminus: MTEPAPTRIYVDADACPVKDEIYKVAERHGLPVSVVAGAFIRVPAHPLIERIAAGSGMDAADDWIAERVQPGDIVVTADVPLASRCVKAGAEVLAPNGKPFSEASIGMTLAVRNLMTDLRSSGEVTGGPRAFSPRDRSTFLAALDTTIRRIARRRASPPAQQQN.

Belongs to the UPF0178 family.

The polypeptide is UPF0178 protein RPD_2254 (Rhodopseudomonas palustris (strain BisB5)).